Reading from the N-terminus, the 449-residue chain is Probable rhamnogalacturonase E (449 aa).

The first 21 residues, 1-21 (MRSKTFSVLSSCLLLIATVQG), serve as a signal peptide directing secretion. A disulfide bond links Cys42 and Cys68. Residues Asn53, Asn91, and Asn106 are each glycosylated (N-linked (GlcNAc...) asparagine). Residue Asp221 is the Proton donor of the active site. Residues Cys223 and Cys240 are joined by a disulfide bond. 2 N-linked (GlcNAc...) asparagine glycosylation sites follow: Asn241 and Asn256. Residue His296 is part of the active site. Residue Asn323 is glycosylated (N-linked (GlcNAc...) asparagine). 2 disulfide bridges follow: Cys346–Cys352 and Cys374–Cys383.

This sequence belongs to the glycosyl hydrolase 28 family.

The protein localises to the secreted. It catalyses the reaction Endohydrolysis of alpha-D-GalA-(1-&gt;2)-alpha-L-Rha glycosidic bond in the rhamnogalacturonan I backbone with initial inversion of anomeric configuration releasing oligosaccharides with beta-D-GalA at the reducing end.. Its function is as follows. Pectinolytic enzymes consist of four classes of enzymes: pectine lyase, polygalacturonase, pectin methylesterase and rhamnogalacturonase. Hydrolyzes alpha-D-galacturonopyranosyl-(1,2)-alpha-L-rhamnopyranosyl linkages in the backbone of the hairy regions of pectins. In Aspergillus flavus (strain ATCC 200026 / FGSC A1120 / IAM 13836 / NRRL 3357 / JCM 12722 / SRRC 167), this protein is Probable rhamnogalacturonase E (rhgE).